A 748-amino-acid polypeptide reads, in one-letter code: Adenosylcobalamin-dependent ribonucleoside-triphosphate reductase (748 aa).

Cysteines 123 and 426 form a disulfide. The segment at 151–162 (SMPYSFMFDELM) is effector region-1. An effector region-2 region spans residues 172 to 320 (TKDNIAKLPP…IGNLIGKTVV (149 aa)). Catalysis depends on residues cysteine 415 and glutamate 417. Residues 572 to 633 (FHYAGYLIQR…DPAFASAGTV (62 aa)) form an adenosylcobalamin-binding-1 region. The segment at 692 to 733 (FKQAPKEPIDVKTYKQKCAAIHGSVAAVFAVQNADHDQKDLE) is adenosylcobalamin-binding-2.

Belongs to the class II ribonucleoside-triphosphate reductase family. As to quaternary structure, monomer. It depends on adenosylcob(III)alamin as a cofactor.

The enzyme catalyses a 2'-deoxyribonucleoside 5'-triphosphate + [thioredoxin]-disulfide + H2O = a ribonucleoside 5'-triphosphate + [thioredoxin]-dithiol. With respect to regulation, allosterically regulated by ATP and dNTP. The chain is Adenosylcobalamin-dependent ribonucleoside-triphosphate reductase (rtpR) from Lacticaseibacillus paracasei (strain ATCC 334 / BCRC 17002 / CCUG 31169 / CIP 107868 / KCTC 3260 / NRRL B-441) (Lactobacillus paracasei).